We begin with the raw amino-acid sequence, 427 residues long: BRO1 domain-containing protein BROX homolog (427 aa).

Residues 1–427 enclose the BRO1 domain; that stretch reads MSHWFHRNPI…PSNSSGCVIA (427 aa).

Belongs to the BROX family.

The sequence is that of BRO1 domain-containing protein BROX homolog from Caenorhabditis elegans.